The primary structure comprises 163 residues: uncharacterized protein (163 aa).

Residues 23–113 (DFPEEPPLWV…QVADGVHSQQ (91 aa)) are disordered. Residue Ser102 is modified to Phosphoserine.

This is an uncharacterized protein from Mus musculus (Mouse).